Here is a 134-residue protein sequence, read N- to C-terminus: Small ribosomal subunit protein uS9 (134 aa).

A disordered region spans residues 113-134 (REVERKKYGLKKARRAPQFSKR). Residues 120–134 (YGLKKARRAPQFSKR) are compositionally biased toward basic residues.

It belongs to the universal ribosomal protein uS9 family.

The protein is Small ribosomal subunit protein uS9 (rpsI) of Thermotoga maritima (strain ATCC 43589 / DSM 3109 / JCM 10099 / NBRC 100826 / MSB8).